A 542-amino-acid chain; its full sequence is Chromatin structure-remodeling complex subunit rsc4 (542 aa).

Residues 6–116 form the Bromo 1 domain; sequence HNAPFDKTKF…NTANSLESKD (111 aa). Disordered stretches follow at residues 114–139 and 246–327; these read SKDG…KPGT and ISSF…PIPE. The segment covering 119 to 128 has biased composition (acidic residues); sequence LNEEENEEME. Positions 139-249 constitute a Bromo 2 domain; it reads TNEIDVPKVI…QLSSSLISSF (111 aa). Basic and acidic residues predominate over residues 252–266; that stretch reads QPKEHSPATSKHEPE. A phosphoserine mark is found at Ser257, Ser271, Ser287, and Ser313. Residues 268–280 are compositionally biased toward low complexity; it reads TPASPTPSVSAST. The span at 286 to 298 shows a compositional bias: polar residues; the sequence is TSVAPSFITSDQA. Over residues 304 to 322 the composition is skewed to basic and acidic residues; that stretch reads LKSEEAHVESFSKESEKDQ.

In terms of assembly, component of the RSC complex composed of at least arp9, arp42, rsc1, rsc4, rsc7, rsc9, rsc58, sfh1, snf21, ssr1, ssr2, ssr3 and ssr4. The complex interacts with histone and histone variant components of centromeric chromatin.

Its subcellular location is the nucleus. Functionally, component of the chromatin structure remodeling complex (RSC), which is involved in transcription regulation and nucleosome positioning. Controls particularly membrane and organelle development genes. The protein is Chromatin structure-remodeling complex subunit rsc4 (rsc4) of Schizosaccharomyces pombe (strain 972 / ATCC 24843) (Fission yeast).